The following is a 292-amino-acid chain: Zinc finger protein OZF (292 aa).

10 consecutive C2H2-type zinc fingers follow at residues 16–38 (FACK…EHFH), 44–66 (FECN…QNTH), 72–94 (LECN…QKIH), 100–122 (FECK…QRTH), 128–150 (FICK…EKIH), 156–178 (FKCN…QNIH), 184–206 (YECN…VRIH), 212–234 (YECN…VRSH), 240–262 (YGCN…LRIH), and 268–290 (YQCS…QKIH). Glycyl lysine isopeptide (Lys-Gly) (interchain with G-Cter in SUMO2) cross-links involve residues K28, K51, and K56. Glycyl lysine isopeptide (Lys-Gly) (interchain with G-Cter in SUMO) cross-links involve residues K157 and K169. K173 is covalently cross-linked (Glycyl lysine isopeptide (Lys-Gly) (interchain with G-Cter in SUMO2)). Positions 212–292 (YECNVCGKAF…HIRHQKIHTH (81 aa)) are interaction with TERF2IP.

This sequence belongs to the krueppel C2H2-type zinc-finger protein family. In terms of assembly, binds DNA. Interacts with SUMO conjugating enzyme UBC9/UBE2I. Interacts with the telomeric protein TERF2IP.

Its subcellular location is the nucleus. The sequence is that of Zinc finger protein OZF (ZNF146) from Bos taurus (Bovine).